Here is a 1133-residue protein sequence, read N- to C-terminus: uncharacterized protein (1133 aa).

Disordered stretches follow at residues 33-83 (QFED…NSSS), 305-629 (PVSN…NSNS), 679-723 (GKLD…SVKR), and 736-817 (IESP…SEEV). Residues 39–83 (NNNNSNNNNNNNNSNNNNSNNNENINRKTGSTLLSSSTSQLNSSS) show a composition bias toward low complexity. Residues 40-308 (NNNSNNNNNN…GHPTCNPVSN (269 aa)) constitute a DNA-binding region (NDT80). Polar residues predominate over residues 305–316 (PVSNNPSTPGTP). A compositionally biased stretch (low complexity) spans 317–384 (ISNFDSSNNN…NNNSSGNSSS (68 aa)). Polar residues predominate over residues 401–417 (INSLSNHNSPHLTPIQY). Residues 418-452 (NNNNNNSNNNSNNNNNNNNNNNNSNNNNNNSNNNN) show a composition bias toward low complexity. The segment covering 453 to 470 (HQFQSNNRIFKGNLSNPF) has biased composition (polar residues). 2 stretches are compositionally biased toward low complexity: residues 473–615 (NYSQ…GNNS) and 686–714 (NNSNNNSSNNNNSNNNSSNNNSNNNNNNN). The segment covering 736–747 (IESPQSYISSPT) has biased composition (polar residues). The span at 757-771 (QPQPQPQPQPQPQPQ) shows a compositional bias: pro residues. Residues 772–808 (PQSQSQSQSQSQSQSQSQSQSQSQPIQQIVQQQLSSP) show a composition bias toward low complexity. Residues 909 to 1020 (SDKRVKENVK…KKVDNVCMEL (112 aa)) form the Peptidase S74 domain. Residues 1055–1075 (IFIGIGVFTLFVIFGLVAVSI) form a helical membrane-spanning segment. Residues 1107 to 1133 (SGSNSCYDSSSNSAIDTTTSTGSGSIK) form a disordered region.

The protein resides in the membrane. This is an uncharacterized protein from Dictyostelium discoideum (Social amoeba).